A 358-amino-acid chain; its full sequence is Probable dual-specificity RNA methyltransferase RlmN 1 (358 aa).

A Radical SAM core domain is found at 101 to 326; the sequence is MQAGGTLCIS…REKGFYTLLR (226 aa). Cysteine 108 and cysteine 337 are oxidised to a cystine. [4Fe-4S] cluster is bound by residues cysteine 115, cysteine 119, and cysteine 122. S-adenosyl-L-methionine contacts are provided by residues 162–163, serine 194, 218–220, and asparagine 294; these read GE and SLN. The active-site S-methylcysteine intermediate is cysteine 337.

Belongs to the radical SAM superfamily. RlmN family. The cofactor is [4Fe-4S] cluster.

It localises to the cytoplasm. It catalyses the reaction adenosine(2503) in 23S rRNA + 2 reduced [2Fe-2S]-[ferredoxin] + 2 S-adenosyl-L-methionine = 2-methyladenosine(2503) in 23S rRNA + 5'-deoxyadenosine + L-methionine + 2 oxidized [2Fe-2S]-[ferredoxin] + S-adenosyl-L-homocysteine. It carries out the reaction adenosine(37) in tRNA + 2 reduced [2Fe-2S]-[ferredoxin] + 2 S-adenosyl-L-methionine = 2-methyladenosine(37) in tRNA + 5'-deoxyadenosine + L-methionine + 2 oxidized [2Fe-2S]-[ferredoxin] + S-adenosyl-L-homocysteine. In terms of biological role, specifically methylates position 2 of adenine 2503 in 23S rRNA and position 2 of adenine 37 in tRNAs. The chain is Probable dual-specificity RNA methyltransferase RlmN 1 from Protochlamydia amoebophila (strain UWE25).